The chain runs to 564 residues: ATP-dependent RNA helicase ROK1 (564 aa).

Disordered regions lie at residues 1–45 (MDIF…ESQI) and 62–87 (EDDREKTTENDSPNKEEKSGNDDGLI). Basic and acidic residues-rich tracts occupy residues 13 to 23 (VKKESGPKAKA), 33 to 45 (DENHKEDNNESQI), and 62 to 86 (EDDREKTTENDSPNKEEKSGNDDGL). Positions 122-150 (DLISRFSFDKRLLNNLIENGFTEPTPIQC) match the Q motif motif. The Helicase ATP-binding domain maps to 153-333 (IPVALNNRDV…QSIMMDPVRV (181 aa)). Residue 166–173 (GPTGSGKT) participates in ATP binding. A DEAD box motif is present at residues 280–283 (DEAD). The region spanning 344 to 506 (NIEQKLIFCG…EVSEWMDKMA (163 aa)) is the Helicase C-terminal domain. The segment at 512–564 (EKESIKNGKAHKERKQITTVPKMDKAKRRRQQEMIAASKRRKNEELSKKHFSK) is disordered. The span at 553 to 564 (KNEELSKKHFSK) shows a compositional bias: basic and acidic residues.

This sequence belongs to the DEAD box helicase family. DDX52/ROK1 subfamily. As to quaternary structure, interacts with the U3 snoRNA and is associated with the 90S and 40S pre-ribosomes. This association requires the presence of RRP5. Also interacts with OSH3.

It localises to the nucleus. Its subcellular location is the nucleolus. It carries out the reaction ATP + H2O = ADP + phosphate + H(+). ATP-dependent RNA helicase involved in 40S ribosomal subunit biogenesis. Required for the processing and cleavage of 35S pre-rRNA at sites A0, A1, and A2, leading to mature 18S rRNA. May also have a gene-specific regulatory function since it affects nuclear fusion by regulating KAR4 expression and contributes with KEM1 to ISP-1 sensitivity. The sequence is that of ATP-dependent RNA helicase ROK1 (ROK1) from Saccharomyces cerevisiae (strain ATCC 204508 / S288c) (Baker's yeast).